A 3036-amino-acid polypeptide reads, in one-letter code: DmX-like protein 2 (3036 aa).

WD repeat units follow at residues 108 to 145, 167 to 207, and 230 to 278; these read FLSS…ILEE, KTSV…KSSI, and AHPR…EDCL. Phosphoserine is present on serine 326. Residues 417-480 are disordered; sequence KQVDHENDDA…EGSPRTYSRL (64 aa). Positions 422–434 are enriched in acidic residues; it reads ENDDADREDEEHS. Residues 435-473 are compositionally biased toward basic and acidic residues; sequence QEDRERGLHMKLDHDLSLDRESEAGTGSSEHEDGEREGS. Position 473 is a phosphoserine (serine 473). Residues 492 to 532 form a WD 4 repeat; that stretch reads DRKIETLLTEWNKNPDMLFTIHPVDGTFLVWHVKYLDEYNP. A Phosphoserine modification is found at serine 588. 3 WD repeats span residues 595 to 634, 751 to 803, and 878 to 920; these read HSRS…KSAF, LHTS…RKLL, and QPSQ…VQAC. The tract at residues 932 to 959 is disordered; that stretch reads SLLSVPGQKNVDSSPETSPSVSPMPHSS. Phosphoserine is present on residues serine 944 and serine 945. Low complexity predominate over residues 949-959; the sequence is SPSVSPMPHSS. The WD 8 repeat unit spans residues 1000-1037; the sequence is LSSSSIYPVCLAPYLVVTTCSDNKVRFWKCCMEANPEC. Phosphoserine is present on residues serine 1140, serine 1143, and serine 1151. WD repeat units follow at residues 1163–1204 and 1244–1281; these read PNIK…VTEQ and GTPS…VKFG. Phosphoserine occurs at positions 1287 and 1400. The residue at position 1417 (threonine 1417) is a Phosphothreonine. Serine 1857 carries the phosphoserine modification. Positions 1927–1936 are enriched in basic and acidic residues; that stretch reads ISHRMDDVPS. Positions 1927 to 1952 are disordered; the sequence is ISHRMDDVPSHSKALSDGNGSSGIEW. The residue at position 1984 (serine 1984) is a Phosphoserine. A disordered region spans residues 1999-2033; that stretch reads KSTDAREKDKQSDQKASDPNMLLTPQEEDDPEGDT. The segment covering 2001 to 2014 has biased composition (basic and acidic residues); sequence TDAREKDKQSDQKA. A Phosphothreonine modification is found at threonine 2022. A compositionally biased stretch (acidic residues) spans 2024–2033; that stretch reads QEEDDPEGDT. The stretch at 2122–2153 forms a coiled coil; it reads GSYERHQIERRRLQAKREHAERRKSWLQKNQD. 2 positions are modified to phosphoserine: serine 2399 and serine 2640. 6 WD repeats span residues 2761–2800, 2804–2843, 2850–2892, 2898–2937, 2940–2979, and 2992–3030; these read RNLH…QLVC, AGNA…SNPK, CHSK…GNSL, CHDH…LIHT, AHDS…LIHS, and NIGA…NIPN.

Interacts with MADD and RAB3GAP.

The protein resides in the cytoplasmic vesicle. It localises to the secretory vesicle. It is found in the synaptic vesicle membrane. The protein localises to the neuronal dense core vesicle. May serve as a scaffold protein for MADD and RAB3GA on synaptic vesicles. Plays a role in the brain as a key controller of neuronal and endocrine homeostatic processes. This is DmX-like protein 2 (DMXL2) from Homo sapiens (Human).